Reading from the N-terminus, the 404-residue chain is GTPase Obg (404 aa).

One can recognise an Obg domain in the interval 1-159; the sequence is MKFIDEARIE…RALRLELKVL (159 aa). A disordered region spans residues 22-43; sequence SFRREKFIPRGGPDGGDGGRGG. The span at 33–43 shows a compositional bias: gly residues; the sequence is GPDGGDGGRGG. The region spanning 160–334 is the OBG-type G domain; it reads ADVGLLGMPN…LVFAIQDFLD (175 aa). GTP-binding positions include 166 to 173, 191 to 195, 213 to 216, 284 to 287, and 315 to 317; these read GMPNAGKS, FTTLA, DIPG, NKLD, and SAL. S173 and T193 together coordinate Mg(2+). The tract at residues 373–404 is disordered; sequence LLAEGETGTGDDGRDGNENDPADEQDTNRPNH.

This sequence belongs to the TRAFAC class OBG-HflX-like GTPase superfamily. OBG GTPase family. As to quaternary structure, monomer. The cofactor is Mg(2+).

It is found in the cytoplasm. An essential GTPase which binds GTP, GDP and possibly (p)ppGpp with moderate affinity, with high nucleotide exchange rates and a fairly low GTP hydrolysis rate. Plays a role in control of the cell cycle, stress response, ribosome biogenesis and in those bacteria that undergo differentiation, in morphogenesis control. This chain is GTPase Obg, found in Aromatoleum aromaticum (strain DSM 19018 / LMG 30748 / EbN1) (Azoarcus sp. (strain EbN1)).